A 563-amino-acid chain; its full sequence is Arylsulfatase K (563 aa).

The first 17 residues, 1–17 (MLLLLVSVIVALALVAP), serve as a signal peptide directing secretion. Ca(2+) contacts are provided by Asp40 and Cys80. Cys80 functions as the Nucleophile in the catalytic mechanism. Cys80 carries the 3-oxoalanine (Cys) modification. A glycan (N-linked (GlcNAc...) asparagine) is linked at Asn108. Residue Lys128 coordinates substrate. N-linked (GlcNAc...) asparagine glycosylation occurs at Asn191. Position 249 (His249) interacts with substrate. An N-linked (GlcNAc...) asparagine glycan is attached at Asn260. Residues Asp311 and His312 each contribute to the Ca(2+) site. N-linked (GlcNAc...) asparagine glycosylation is found at Asn373, Asn411, and Asn496.

It belongs to the sulfatase family. It depends on Ca(2+) as a cofactor. In terms of processing, the conversion to 3-oxoalanine (also known as C-formylglycine, FGly), of a serine or cysteine residue in prokaryotes and of a cysteine residue in eukaryotes, is critical for catalytic activity. Post-translationally, the 75-kDa precursor undergoes proteolytic processing to yield a 23 kDa form. N-glycosylated with both high mannose and complex type sugars.

The protein localises to the secreted. It is found in the lysosome. The catalysed reaction is an aryl sulfate + H2O = a phenol + sulfate + H(+). It catalyses the reaction Hydrolysis of the 2-sulfate groups of the 2-O-sulfo-D-glucuronate residues of chondroitin sulfate, heparin and heparitin sulfate.. In terms of biological role, catalyzes the hydrolysis of pseudosubstrates such as p-nitrocatechol sulfate and p-nitrophenyl sulfate. Catalyzes the hydrolysis of the 2-sulfate groups of the 2-O-sulfo-D-glucuronate residues of chondroitin sulfate, heparin and heparitin sulfate. Acts selectively on 2-sulfoglucuronate and lacks activity against 2-sulfoiduronate. This chain is Arylsulfatase K (Arsk), found in Rattus norvegicus (Rat).